The primary structure comprises 234 residues: 1-(5-phosphoribosyl)-5-[(5-phosphoribosylamino)methylideneamino] imidazole-4-carboxamide isomerase (234 aa).

The active-site Proton acceptor is Asp-8. The active-site Proton donor is the Asp-128.

Belongs to the HisA/HisF family.

The protein resides in the cytoplasm. It carries out the reaction 1-(5-phospho-beta-D-ribosyl)-5-[(5-phospho-beta-D-ribosylamino)methylideneamino]imidazole-4-carboxamide = 5-[(5-phospho-1-deoxy-D-ribulos-1-ylimino)methylamino]-1-(5-phospho-beta-D-ribosyl)imidazole-4-carboxamide. It participates in amino-acid biosynthesis; L-histidine biosynthesis; L-histidine from 5-phospho-alpha-D-ribose 1-diphosphate: step 4/9. In Cenarchaeum symbiosum (strain A), this protein is 1-(5-phosphoribosyl)-5-[(5-phosphoribosylamino)methylideneamino] imidazole-4-carboxamide isomerase.